The following is a 1915-amino-acid chain: Methylcytosine dioxygenase tet3-B (1915 aa).

The disordered stretch occupies residues 28-49; the sequence is RLRVSEMPSELNGGGDGSKGDG. The CXXC-type zinc finger occupies 61-102; sequence SNKKRKRCGVCVPCLRKEPCGTCYNCVNRSTSHQICKMRKCE. Zn(2+) is bound by residues Cys68, Cys71, Cys74, Cys80, Cys83, Cys86, Cys96, and Cys101. Residues 629-638 are compositionally biased toward polar residues; it reads PNSQQAPVSK. 3 disordered regions span residues 629-679, 776-806, and 831-880; these read PNSQ…RVKE, GRCP…VPGQ, and FSLP…LSNN. The segment covering 664–676 has biased composition (basic residues); that stretch reads KPPRKQVQIKKPR. The span at 779–793 shows a compositional bias: low complexity; the sequence is PTPSTGDSSSGQGDS. Composition is skewed to polar residues over residues 838-854 and 864-880; these read VPSQ…TSGV and QLPS…LSNN. Cys974, Cys976, Cys1034, His1060, and Cys1062 together coordinate Zn(2+). A 2-oxoglutarate-binding site is contributed by Arg1102. Cys1112, Cys1114, Cys1130, Cys1139, and Cys1199 together coordinate Zn(2+). Residue Cys1215 participates in 2-oxoglutarate binding. His1221 serves as a coordination point for Zn(2+). Fe cation-binding residues include His1223 and Asp1225. Position 1257 (His1257) interacts with 2-oxoglutarate. Disordered stretches follow at residues 1298–1356, 1469–1516, and 1719–1753; these read LSEP…QTKP, GMNQ…APME, and PAVN…VKEE. Basic and acidic residues predominate over residues 1308 to 1339; that stretch reads RQLDAKKATAEKKKLQKEKLVSPDKTKQEPSD. Polar residues predominate over residues 1340 to 1355; it reads TKTCQQNPGVPQQQTK. Positions 1482–1491 are enriched in basic and acidic residues; the sequence is NYRRSSEVPH. 2 stretches are compositionally biased toward polar residues: residues 1494–1503 and 1720–1732; these read SLQNSNSQKS and AVNS…SQNH. His1794 contributes to the Fe cation binding site. 1809–1811 contacts 2-oxoglutarate; the sequence is RIS. A coiled-coil region spans residues 1827-1860; it reads LALWEAKMKQLAERARVKEEEAAKLGIKQEVKSL.

It belongs to the TET family. Requires Fe(2+) as cofactor. It depends on Zn(2+) as a cofactor. As to expression, detected in embryo (at protein level). Detected in embryonic head, in developing brain and eye.

It is found in the nucleus. The protein resides in the chromosome. It carries out the reaction a 5-methyl-2'-deoxycytidine in DNA + 2-oxoglutarate + O2 = a 5-hydroxymethyl-2'-deoxycytidine in DNA + succinate + CO2. The enzyme catalyses a 5-hydroxymethyl-2'-deoxycytidine in DNA + 2-oxoglutarate + O2 = a 5-formyl-2'-deoxycytidine in DNA + succinate + CO2 + H2O. It catalyses the reaction a 5-formyl-2'-deoxycytidine in DNA + 2-oxoglutarate + O2 = a 5-carboxyl-2'-deoxycytidine in DNA + succinate + CO2 + H(+). Its function is as follows. Dioxygenase that catalyzes the conversion of the modified genomic base 5-methylcytosine (5mC) into 5-hydroxymethylcytosine (5hmC) and plays a key role in epigenetic chromatin reprogramming during embryonic development. Conversion of 5mC into 5hmC probably constitutes the first step in cytosine demethylation. Selectively binds to the promoter region of target genes and contributes to regulate the expression of numerous developmental genes, including pax6, rax, sox9 and six3. May also contribute to the regulation of target genes in ways that do not require its enzyme activity. The chain is Methylcytosine dioxygenase tet3-B from Xenopus laevis (African clawed frog).